A 187-amino-acid polypeptide reads, in one-letter code: Elongation factor P (187 aa).

It belongs to the elongation factor P family.

The protein resides in the cytoplasm. It participates in protein biosynthesis; polypeptide chain elongation. Functionally, involved in peptide bond synthesis. Stimulates efficient translation and peptide-bond synthesis on native or reconstituted 70S ribosomes in vitro. Probably functions indirectly by altering the affinity of the ribosome for aminoacyl-tRNA, thus increasing their reactivity as acceptors for peptidyl transferase. The polypeptide is Elongation factor P (Arthrobacter sp. (strain FB24)).